Reading from the N-terminus, the 1519-residue chain is Putative lipoprotein YghJ (1519 aa).

Residues 1-23 form the signal peptide; it reads MNKKFKYKKSLLAAILSATLLAG. Disordered stretches follow at residues 22–107 and 226–247; these read AGCD…GATC and NAAT…TTPG. A lipid anchor (N-palmitoyl cysteine) is attached at Cys24. The S-diacylglycerol cysteine moiety is linked to residue Cys24. Residues 31-42 are compositionally biased toward low complexity; the sequence is SSSDTPPVDSGT. The span at 51–77 shows a compositional bias: pro residues; sequence DPTPNPEPTPEPTPDPEPTPEPIPDPE. The segment covering 97–107 has biased composition (polar residues); sequence GGSQRVTGATC. The span at 234–247 shows a compositional bias: low complexity; that stretch reads STHTSPVVPVTTPG. The Peptidase M60 domain occupies 1080–1380; that stretch reads GNMQSTGLWA…MYAQLKEWAE (301 aa). Positions 1497–1519 are disordered; that stretch reads DLPKPEQGPETINQVTEHKMSAE.

It to V.cholerae AcfD (VC_0845).

The protein localises to the cell membrane. Its function is as follows. May be a substrate of the type II secretion system beta (T2SS-beta). This is Putative lipoprotein YghJ (yghJ) from Escherichia coli O78:H11 (strain H10407 / ETEC).